The chain runs to 1550 residues: Cellulose synthase 1 (1550 aa).

The segment at 1 to 741 (MPEVRSSTQS…KERVLKGTVK (741 aa)) is catalytic. 3 helical membrane passes run 26-46 (GAGLTIGVFGLCALIAATSVT), 47-67 (LPPEQQLIVAFVCVVIFFIVG), and 106-126 (GLLGTMLLVAELYALMMLFLS). The tract at residues 147–240 (EWPTVDIFVP…YILIFDCDHV (94 aa)) is catalytic subdomain A. Aspartate 189 is an active-site residue. The substrate site is built by aspartate 236 and aspartate 238. The interval 317 to 377 (TAIEQIGGFA…GQRVRWARGM (61 aa)) is catalytic subdomain B. The active site involves aspartate 333. Helical transmembrane passes span 398-418 (LCYLSAMTSFLFAVPRVIFLS), 423-443 (FLFFGQNIIAASPLALLAYAI), 468-488 (VYETTMALFLVRVTIVTLLSP), 507-527 (FDLGAVYPNIILGLIMFGGLA), and 547-567 (LLNSAWAMLSLIIILAAIAVG). The 76-residue stretch at 572–647 (QKRNSHRIPA…PARIIRAGNG (76 aa)) folds into the PilZ domain. Disordered regions lie at residues 711-734 (SSPTKPLAGNALSDDTNNPSRKER) and 768-813 (APAH…QPLA). Positions 742–1550 (MVSLLALLTF…KQLEDERRKS (809 aa)) are cyclic di-GMP binding domain. The segment covering 768–796 (APAHQPEASDLPPLPALLPATSGAAQAGA) has biased composition (low complexity). The helical transmembrane segment at 1513–1533 (VLLVGLLGCILIVSVLARALA) threads the bilayer.

The protein in the N-terminal section; belongs to the glycosyltransferase 2 family. In the C-terminal section; belongs to the AcsB/BcsB family. The cofactor is Mg(2+).

Its subcellular location is the cell inner membrane. It catalyses the reaction [(1-&gt;4)-beta-D-glucosyl](n) + UDP-alpha-D-glucose = [(1-&gt;4)-beta-D-glucosyl](n+1) + UDP + H(+). The protein operates within glycan metabolism; bacterial cellulose biosynthesis. With respect to regulation, activated by c-di-GMP. Bifunctional protein comprised of a catalytic subunit and a regulatory subunit. The catalytic subunit of cellulose synthase polymerizes uridine 5'-diphosphate glucose to cellulose in a processive way. The thick cellulosic mats generated by this enzyme probably provide a specialized protective environment to the bacterium. The regulatory subunit binds bis-(3'-5') cyclic diguanylic acid (c-di-GMP). In Komagataeibacter xylinus (Gluconacetobacter xylinus), this protein is Cellulose synthase 1 (acsAB).